Consider the following 1232-residue polypeptide: DNA-directed RNA polymerase subunit beta (1232 aa).

The disordered stretch occupies residues 1170–1232; that stretch reads SVDEDADELE…LDLDDFGDEH (63 aa). A compositionally biased stretch (acidic residues) spans 1171-1180; it reads VDEDADELEV. Basic and acidic residues predominate over residues 1189 to 1198; it reads PEEKEEKEKE. A compositionally biased stretch (acidic residues) spans 1199–1232; that stretch reads DSDEYDDLREEDVEPDLEELSLDDLDLDDFGDEH.

The protein belongs to the RNA polymerase beta chain family. In terms of assembly, the RNAP catalytic core consists of 2 alpha, 1 beta, 1 beta' and 1 omega subunit. When a sigma factor is associated with the core the holoenzyme is formed, which can initiate transcription.

It catalyses the reaction RNA(n) + a ribonucleoside 5'-triphosphate = RNA(n+1) + diphosphate. DNA-dependent RNA polymerase catalyzes the transcription of DNA into RNA using the four ribonucleoside triphosphates as substrates. The sequence is that of DNA-directed RNA polymerase subunit beta from Clostridium botulinum (strain Kyoto / Type A2).